The following is a 67-amino-acid chain: DNA gyrase inhibitor YacG (67 aa).

Zn(2+) contacts are provided by C9, C12, C28, and C32. A disordered region spans residues 46–67; the sequence is RIPSSGDLNDSDDWSEQPLDRQ.

The protein belongs to the DNA gyrase inhibitor YacG family. As to quaternary structure, interacts with GyrB. The cofactor is Zn(2+).

In terms of biological role, inhibits all the catalytic activities of DNA gyrase by preventing its interaction with DNA. Acts by binding directly to the C-terminal domain of GyrB, which probably disrupts DNA binding by the gyrase. The chain is DNA gyrase inhibitor YacG from Erwinia tasmaniensis (strain DSM 17950 / CFBP 7177 / CIP 109463 / NCPPB 4357 / Et1/99).